Here is a 544-residue protein sequence, read N- to C-terminus: Chitin-inducible gibberellin-responsive protein 2 (544 aa).

Residues 1 to 123 are disordered; sequence MADTPTSRMI…VGASCVTEDP (123 aa). Composition is skewed to polar residues over residues 15 to 30, 63 to 74, and 86 to 101; these read NIPSQNLKQFQYSDNP, SQATPNKYTLDS, and PSSQSFTTRSGSPLSQ. The GRAS domain occupies 165-544; the sequence is RMMGIPRGNL…RPLVVSSAWH (380 aa). Residues 172–232 are leucine repeat I (LRI); that stretch reads GNLKELLIAC…VARLASSGIS (61 aa). A VHIID region spans residues 251–316; that stretch reads MHFLYEACPY…GGPPTVRITG (66 aa). A VHIID motif is present at residues 282–286; the sequence is IHIID. The leucine repeat II (LRII) stretch occupies residues 332–364; it reads LVGRRLSHIASLCKVPFEFHPLAISGSKVEAAH. The segment at 373–467 is PFYRE; sequence LAVNFTLELH…QHCLAREIVN (95 aa). The tract at residues 470–544 is SAW; sequence ACEGEERAER…RPLVVSSAWH (75 aa).

Belongs to the GRAS family.

It is found in the nucleus. Functionally, may play a regulatory role in the early step of oligosaccharide elicitor response, downstream of the membrane-associated high-affinity chitin-binding protein. The protein is Chitin-inducible gibberellin-responsive protein 2 (CIGR2) of Oryza sativa subsp. japonica (Rice).